A 178-amino-acid polypeptide reads, in one-letter code: Actin-related protein 2/3 complex subunit 3-A (178 aa).

It belongs to the ARPC3 family. In terms of assembly, component of the Arp2/3 complex composed of actr2/arp2, actr3/arp3, arpc1 (arpc1a or arpc1b), arpc2, arpc3, arpc4 and arpc5.

It is found in the cytoplasm. The protein localises to the cytoskeleton. Its subcellular location is the cell projection. It localises to the nucleus. Functionally, component of the Arp2/3 complex, a multiprotein complex that mediates actin polymerization upon stimulation by nucleation-promoting factor (NPF). The Arp2/3 complex mediates the formation of branched actin networks in the cytoplasm, providing the force for cell motility. In addition to its role in the cytoplasmic cytoskeleton, the Arp2/3 complex also promotes actin polymerization in the nucleus, thereby regulating gene transcription and repair of damaged DNA. The Arp2/3 complex promotes homologous recombination (HR) repair in response to DNA damage by promoting nuclear actin polymerization, leading to drive motility of double-strand breaks (DSBs). This is Actin-related protein 2/3 complex subunit 3-A (arpc3-a) from Xenopus laevis (African clawed frog).